We begin with the raw amino-acid sequence, 276 residues long: Probable ABC transporter permease protein PH1036 (276 aa).

A run of 6 helical transmembrane segments spans residues 12–32 (IAWSIGIAWLIPFMGVLMASV), 75–95 (IVAIPSTIVPVIVASLAAYAF), 109–129 (FIVLLMALPQQMTVVPLYFLL), 137–157 (TFRGLIIVHSAWGLAWIIFFM), 186–206 (IVLPMALPGLISASILQFTWV), and 241–261 (GLLTAASIMVMLVPLLVYALF). The ABC transmembrane type-1 domain maps to 70-261 (LKNSLIVAIP…LVPLLVYALF (192 aa)).

This sequence belongs to the binding-protein-dependent transport system permease family. MalFG subfamily.

It localises to the cell membrane. Functionally, probably part of a binding-protein-dependent transport system PH1036/38/39. Probably responsible for the translocation of the substrate across the membrane. This Pyrococcus horikoshii (strain ATCC 700860 / DSM 12428 / JCM 9974 / NBRC 100139 / OT-3) protein is Probable ABC transporter permease protein PH1036.